Here is a 466-residue protein sequence, read N- to C-terminus: Ribulose bisphosphate carboxylase large chain (466 aa).

The residue at position 5 (Lys-5) is an N6,N6,N6-trimethyllysine. Residues Asn-114 and Thr-164 each contribute to the substrate site. The active-site Proton acceptor is Lys-166. Lys-168 serves as a coordination point for substrate. Mg(2+) contacts are provided by Lys-192, Asp-194, and Glu-195. N6-carboxylysine is present on Lys-192. His-285 functions as the Proton acceptor in the catalytic mechanism. The substrate site is built by Arg-286, His-318, and Ser-370.

It belongs to the RuBisCO large chain family. Type I subfamily. As to quaternary structure, heterohexadecamer of 8 large chains and 8 small chains; disulfide-linked. The disulfide link is formed within the large subunit homodimers. Requires Mg(2+) as cofactor. In terms of processing, the disulfide bond which can form in the large chain dimeric partners within the hexadecamer appears to be associated with oxidative stress and protein turnover.

It localises to the plastid. The protein resides in the chloroplast. It carries out the reaction 2 (2R)-3-phosphoglycerate + 2 H(+) = D-ribulose 1,5-bisphosphate + CO2 + H2O. The enzyme catalyses D-ribulose 1,5-bisphosphate + O2 = 2-phosphoglycolate + (2R)-3-phosphoglycerate + 2 H(+). RuBisCO catalyzes two reactions: the carboxylation of D-ribulose 1,5-bisphosphate, the primary event in carbon dioxide fixation, as well as the oxidative fragmentation of the pentose substrate in the photorespiration process. Both reactions occur simultaneously and in competition at the same active site. This chain is Ribulose bisphosphate carboxylase large chain, found in Silene gallica (Common catchfly).